Here is a 734-residue protein sequence, read N- to C-terminus: Photosystem I P700 chlorophyll a apoprotein A2 (734 aa).

8 consecutive transmembrane segments (helical) span residues 46–69 (IFAS…FHVA), 135–158 (LYTG…LHLQ), 175–199 (LNHH…HVAI), 273–291 (IAHH…GHMY), 330–353 (LHFQ…QHMY), 369–395 (AALY…IFFI), 417–439 (AIIS…LYVH), and 517–535 (FLVH…LILV). Positions 559 and 568 each coordinate [4Fe-4S] cluster. A run of 2 helical transmembrane segments spans residues 575 to 596 (AFYL…YWHW) and 643 to 665 (LSVW…MFLI). 3 residues coordinate chlorophyll a: H654, M662, and Y670. W671 contacts phylloquinone. The chain crosses the membrane as a helical span at residues 707-727 (LVGLAHFSVGYIFTYAAFLIA).

It belongs to the PsaA/PsaB family. The PsaA/B heterodimer binds the P700 chlorophyll special pair and subsequent electron acceptors. PSI consists of a core antenna complex that captures photons, and an electron transfer chain that converts photonic excitation into a charge separation. The eukaryotic PSI reaction center is composed of at least 11 subunits. It depends on P700 is a chlorophyll a/chlorophyll a' dimer, A0 is one or more chlorophyll a, A1 is one or both phylloquinones and FX is a shared 4Fe-4S iron-sulfur center. as a cofactor.

Its subcellular location is the plastid. The protein resides in the chloroplast thylakoid membrane. It carries out the reaction reduced [plastocyanin] + hnu + oxidized [2Fe-2S]-[ferredoxin] = oxidized [plastocyanin] + reduced [2Fe-2S]-[ferredoxin]. Functionally, psaA and PsaB bind P700, the primary electron donor of photosystem I (PSI), as well as the electron acceptors A0, A1 and FX. PSI is a plastocyanin-ferredoxin oxidoreductase, converting photonic excitation into a charge separation, which transfers an electron from the donor P700 chlorophyll pair to the spectroscopically characterized acceptors A0, A1, FX, FA and FB in turn. Oxidized P700 is reduced on the lumenal side of the thylakoid membrane by plastocyanin. The chain is Photosystem I P700 chlorophyll a apoprotein A2 from Solanum bulbocastanum (Wild potato).